Consider the following 452-residue polypeptide: Probable ECA polymerase (452 aa).

11 consecutive transmembrane segments (helical) span residues 6–26, 37–57, 63–83, 118–138, 155–175, 181–201, 207–227, 228–248, 341–361, 378–398, and 410–430; these read FSGLLVVWLLSTLFIATLTWF, VFFSLLFLLTFFFGFPLTSVL, VGVAPPEILLQALLSAACFYG, VILMGIALVSVAIFFMHNGFL, GVALKRFFYFFIPAMLVVYFL, AWLFFLVSTVAFGLLTYMIVG, IIIAFAIFLFIGIIRGWISLW, MLAAAGVLGIVGMFWLALKRY, LVVMGGALFIPLGAIVVGMII, YKAAILHSFCFGAIFNMIVLA, and VFFLVVFGASLLVAKLLFWLF.

Belongs to the WzyE family. As to quaternary structure, probably part of a complex composed of WzxE, WzyE and WzzE.

It localises to the cell inner membrane. Its pathway is bacterial outer membrane biogenesis; enterobacterial common antigen biosynthesis. Probably involved in the polymerization of enterobacterial common antigen (ECA) trisaccharide repeat units. This is Probable ECA polymerase from Salmonella newport (strain SL254).